The sequence spans 474 residues: tRNA-2-methylthio-N(6)-dimethylallyladenosine synthase (474 aa).

An MTTase N-terminal domain is found at 3-120 (KKLHIKTWGC…LPEMINSVRG (118 aa)). Residues Cys-12, Cys-49, Cys-83, Cys-157, Cys-161, and Cys-164 each contribute to the [4Fe-4S] cluster site. A Radical SAM core domain is found at 143-375 (RAEGPTAFVS…QERINQQAMA (233 aa)). Residues 378 to 441 (RRMLGTTQRI…PNSLRGKVVR (64 aa)) enclose the TRAM domain.

Belongs to the methylthiotransferase family. MiaB subfamily. In terms of assembly, monomer. It depends on [4Fe-4S] cluster as a cofactor.

It is found in the cytoplasm. It carries out the reaction N(6)-dimethylallyladenosine(37) in tRNA + (sulfur carrier)-SH + AH2 + 2 S-adenosyl-L-methionine = 2-methylsulfanyl-N(6)-dimethylallyladenosine(37) in tRNA + (sulfur carrier)-H + 5'-deoxyadenosine + L-methionine + A + S-adenosyl-L-homocysteine + 2 H(+). Its function is as follows. Catalyzes the methylthiolation of N6-(dimethylallyl)adenosine (i(6)A), leading to the formation of 2-methylthio-N6-(dimethylallyl)adenosine (ms(2)i(6)A) at position 37 in tRNAs that read codons beginning with uridine. In Shigella boydii serotype 18 (strain CDC 3083-94 / BS512), this protein is tRNA-2-methylthio-N(6)-dimethylallyladenosine synthase.